The chain runs to 653 residues: Threonine--tRNA ligase (653 aa).

The TGS domain occupies 1–61 (MIKITFPDGN…NEDAEVKLFK (61 aa)). Residues 243–542 (DHRKIGKELE…LIEHTAGKFP (300 aa)) form a catalytic region. Zn(2+)-binding residues include cysteine 338, histidine 389, and histidine 519.

This sequence belongs to the class-II aminoacyl-tRNA synthetase family. Homodimer. Zn(2+) serves as cofactor.

It localises to the cytoplasm. The enzyme catalyses tRNA(Thr) + L-threonine + ATP = L-threonyl-tRNA(Thr) + AMP + diphosphate + H(+). Catalyzes the attachment of threonine to tRNA(Thr) in a two-step reaction: L-threonine is first activated by ATP to form Thr-AMP and then transferred to the acceptor end of tRNA(Thr). Also edits incorrectly charged L-seryl-tRNA(Thr). The polypeptide is Threonine--tRNA ligase (Porphyromonas gingivalis (strain ATCC 33277 / DSM 20709 / CIP 103683 / JCM 12257 / NCTC 11834 / 2561)).